Here is a 401-residue protein sequence, read N- to C-terminus: Argininosuccinate synthase (401 aa).

Residue 8 to 16 (AYSGGLDTS) coordinates ATP. Position 87 (tyrosine 87) interacts with L-citrulline. Glycine 117 lines the ATP pocket. The L-aspartate site is built by threonine 119, asparagine 123, and aspartate 124. Asparagine 123 provides a ligand contact to L-citrulline. 4 residues coordinate L-citrulline: arginine 127, serine 175, glutamate 259, and tyrosine 271.

It belongs to the argininosuccinate synthase family. Type 1 subfamily. In terms of assembly, homotetramer.

It is found in the cytoplasm. The enzyme catalyses L-citrulline + L-aspartate + ATP = 2-(N(omega)-L-arginino)succinate + AMP + diphosphate + H(+). Its pathway is amino-acid biosynthesis; L-arginine biosynthesis; L-arginine from L-ornithine and carbamoyl phosphate: step 2/3. In Arthrobacter sp. (strain FB24), this protein is Argininosuccinate synthase.